The chain runs to 275 residues: Exosome complex component Rrp42 (275 aa).

It belongs to the RNase PH family. Rrp42 subfamily. In terms of assembly, component of the archaeal exosome complex. Forms a hexameric ring-like arrangement composed of 3 Rrp41-Rrp42 heterodimers. The hexameric ring associates with a trimer of Rrp4 and/or Csl4 subunits.

It localises to the cytoplasm. Functionally, non-catalytic component of the exosome, which is a complex involved in RNA degradation. Contributes to the structuring of the Rrp41 active site. This chain is Exosome complex component Rrp42, found in Saccharolobus solfataricus (strain ATCC 35092 / DSM 1617 / JCM 11322 / P2) (Sulfolobus solfataricus).